Here is a 127-residue protein sequence, read N- to C-terminus: Small ribosomal subunit protein eS8 (127 aa).

The tract at residues Met1–Arg25 is disordered.

It belongs to the eukaryotic ribosomal protein eS8 family. In terms of assembly, part of the 30S ribosomal subunit.

The sequence is that of Small ribosomal subunit protein eS8 from Thermoplasma volcanium (strain ATCC 51530 / DSM 4299 / JCM 9571 / NBRC 15438 / GSS1).